Here is a 350-residue protein sequence, read N- to C-terminus: Protein RecA (350 aa).

Glycine 66–threonine 73 contacts ATP.

Belongs to the RecA family.

It is found in the cytoplasm. In terms of biological role, can catalyze the hydrolysis of ATP in the presence of single-stranded DNA, the ATP-dependent uptake of single-stranded DNA by duplex DNA, and the ATP-dependent hybridization of homologous single-stranded DNAs. It interacts with LexA causing its activation and leading to its autocatalytic cleavage. The polypeptide is Protein RecA (Nocardioides sp. (strain ATCC BAA-499 / JS614)).